The following is a 575-amino-acid chain: Preprotein translocase subunit SCY2, chloroplastic (575 aa).

Residues 1-34 (MNSSQACFFHFSLRPISLSHPSYAFLSKRDPFLC) constitute a chloroplast transit peptide. A run of 10 helical transmembrane segments spans residues 157–177 (FVTAVLLVLSRVGYFIPLPGF), 206–226 (LSLFQLGLSPQIIASIIMQVL), 251–271 (IWWLSFFFAIVEALVVAYTSL), 285–305 (VMMTSSLLVCGAMTMTWLCDT), 306–326 (ISESGFGHGSSLIICVGILTG), 346–366 (LPYLLGLLGIFTVVTMFAVVV), 414–434 (TTYLLAFPSILASILGSPFLL), 447–467 (GAPPWVYYSIYAFFVFLFNIF), 509–529 (FWGGLLLSFLATASTVLDHYL), and 531–551 (SINQGFSIGFTSVLIIVGSII).

This sequence belongs to the SecY/SEC61-alpha family. In terms of assembly, part of a second Sec protein translocation apparatus. Interacts probably with SECA2. Ubiquitous.

The protein resides in the plastid. The protein localises to the chloroplast membrane. It localises to the amyloplast membrane. Its subcellular location is the chloroplast thylakoid membrane. Functionally, involved in protein export. Probably interacts with other proteins to allow the postimport or conservative sorting pathway for inner membrane proteins in plastids. Central subunit of the protein translocation channel SecYE. Consists of two halves formed by TMs 1-5 and 6-10. These two domains form a lateral gate at the front which open onto the bilayer between TMs 2 and 7, and are clamped together by SecE at the back. The channel is closed by both a pore ring composed of hydrophobic SecY resides and a short helix (helix 2A) on the extracellular side of the membrane which forms a plug. This Arabidopsis thaliana (Mouse-ear cress) protein is Preprotein translocase subunit SCY2, chloroplastic (SCY2).